Here is a 279-residue protein sequence, read N- to C-terminus: NAD kinase (279 aa).

Aspartate 61 (proton acceptor) is an active-site residue. NAD(+)-binding positions include aspartate 61–glycine 62, asparagine 138–aspartate 139, lysine 149, lysine 166, aspartate 168, and threonine 179–serine 184.

This sequence belongs to the NAD kinase family. The cofactor is a divalent metal cation.

It localises to the cytoplasm. It catalyses the reaction NAD(+) + ATP = ADP + NADP(+) + H(+). In terms of biological role, involved in the regulation of the intracellular balance of NAD and NADP, and is a key enzyme in the biosynthesis of NADP. Catalyzes specifically the phosphorylation on 2'-hydroxyl of the adenosine moiety of NAD to yield NADP. The chain is NAD kinase from Borrelia garinii subsp. bavariensis (strain ATCC BAA-2496 / DSM 23469 / PBi) (Borreliella bavariensis).